A 113-amino-acid polypeptide reads, in one-letter code: Transcriptional activator RamA (113 aa).

Residues 9–107 form the HTH araC/xylS-type domain; sequence DTIVEWIDDN…HQPPGAYRKE (99 aa). DNA-binding regions (H-T-H motif) lie at residues 26-47 and 74-97; these read EDIA…LQYK and VYEI…TRTF.

Probable transcriptional activator. The chain is Transcriptional activator RamA (ramA) from Enterobacter cloacae.